Consider the following 125-residue polypeptide: MLPHQNSSYTRQGTNDAQANDMRSPSQLPTSVNIEDPSKLCISSEKLNTPMHNRSRSGIKKHTSVKRSRSFKLFDTLFFGILRLRKQRIRSVKKVRSISSPVLISTTSALALATIEQQPVIGECS.

Over residues 1 to 33 the composition is skewed to polar residues; sequence MLPHQNSSYTRQGTNDAQANDMRSPSQLPTSVN. 2 disordered regions span residues 1-35 and 44-63; these read MLPH…VNIE and SEKL…KKHT. Residues 53-63 are compositionally biased toward basic residues; it reads NRSRSGIKKHT.

This is an uncharacterized protein from Schizosaccharomyces pombe (strain 972 / ATCC 24843) (Fission yeast).